The chain runs to 401 residues: S-adenosylmethionine synthase (401 aa).

136 to 141 (GQGSVD) serves as a coordination point for ATP.

Belongs to the AdoMet synthase 2 family. Mg(2+) serves as cofactor.

It catalyses the reaction L-methionine + ATP + H2O = S-adenosyl-L-methionine + phosphate + diphosphate. It participates in amino-acid biosynthesis; S-adenosyl-L-methionine biosynthesis; S-adenosyl-L-methionine from L-methionine: step 1/1. Catalyzes the formation of S-adenosylmethionine from methionine and ATP. This chain is S-adenosylmethionine synthase (mat), found in Pyrococcus abyssi (strain GE5 / Orsay).